Consider the following 317-residue polypeptide: Lipopolysaccharide heptosyltransferase 1 (317 aa).

ADP-L-glycero-beta-D-manno-heptose is bound by residues threonine 187, threonine 188, lysine 192, glutamate 222, methionine 242, aspartate 261, threonine 262, glycine 263, and histidine 266.

Belongs to the glycosyltransferase 9 family.

Its subcellular location is the cell inner membrane. The catalysed reaction is an alpha-Kdo-(2-&gt;4)-alpha-Kdo-(2-&gt;6)-lipid A + ADP-L-glycero-beta-D-manno-heptose = an L-alpha-D-Hep-(1-&gt;5)-[alpha-Kdo-(2-&gt;4)]-alpha-Kdo-(2-&gt;6)-lipid A + ADP + H(+). It functions in the pathway bacterial outer membrane biogenesis; LPS core biosynthesis. In terms of biological role, glycosyltransferase involved in the biosynthesis of the core oligosaccharide region of lipopolysaccharide (LPS). Catalyzes the addition of the first heptose unit to one 3-deoxy-D-manno-octulosonic acid (Kdo) residue of the Kdo2-lipid A module. This is Lipopolysaccharide heptosyltransferase 1 from Salmonella typhimurium (strain LT2 / SGSC1412 / ATCC 700720).